Here is a 397-residue protein sequence, read N- to C-terminus: T-box transcription factor TBX19 (397 aa).

The T-box DNA-binding region spans 48 to 216 (LWQRFREVTN…YNPFAKAFLD (169 aa)). Residues 220-248 (RNHPKDAPEAASEGQHMTYSHSPQAPHGC) are disordered.

The protein resides in the nucleus. Functionally, may be involved in the initial formation of the chordamesoderm. In Gallus gallus (Chicken), this protein is T-box transcription factor TBX19.